The chain runs to 910 residues: Ubiquitin carboxyl-terminal hydrolase 9 (910 aa).

Residues 19-134 (TTPEEEKRIV…GGPPIERKLI (116 aa)) enclose the DUSP domain. A disordered region spans residues 68–89 (ISGESSEASRPGPIDNHDIIES). Positions 303 to 894 (AGLSNLGNTC…AAYVLFYRRV (592 aa)) constitute a USP domain. The Nucleophile role is filled by cysteine 312. Histidine 852 serves as the catalytic Proton acceptor.

The protein belongs to the peptidase C19 family.

The catalysed reaction is Thiol-dependent hydrolysis of ester, thioester, amide, peptide and isopeptide bonds formed by the C-terminal Gly of ubiquitin (a 76-residue protein attached to proteins as an intracellular targeting signal).. Recognizes and hydrolyzes the peptide bond at the C-terminal Gly of ubiquitin. Involved in the processing of poly-ubiquitin precursors as well as that of ubiquitinated proteins. This chain is Ubiquitin carboxyl-terminal hydrolase 9 (UBP9), found in Arabidopsis thaliana (Mouse-ear cress).